The sequence spans 353 residues: Protein Wnt-11b-2 (353 aa).

A signal peptide spans 1 to 22; sequence MALIRHCVTLLLILCCSRLCGA. Residues asparagine 31, asparagine 38, and asparagine 88 are each glycosylated (N-linked (GlcNAc...) asparagine). 5 disulfides stabilise this stretch: cysteine 78-cysteine 89, cysteine 128-cysteine 136, cysteine 138-cysteine 155, cysteine 208-cysteine 222, and cysteine 210-cysteine 217. Residue serine 214 is the site of O-palmitoleoyl serine; by PORCN attachment. 2 positions are modified to sulfotyrosine: tyrosine 274 and tyrosine 281. Intrachain disulfides connect cysteine 282–cysteine 313, cysteine 298–cysteine 308, cysteine 312–cysteine 352, cysteine 328–cysteine 343, cysteine 330–cysteine 340, and cysteine 335–cysteine 336. An N-linked (GlcNAc...) asparagine glycan is attached at asparagine 299.

It belongs to the Wnt family. As to quaternary structure, homodimer. Secreted homodimers form a complex with wnt5a homodimers; tyrosine sulfation of both wnt11 and wnt5a by tpst1 is required for this interaction. Interacts with the transmembrane receptor fzd7/fz7. Interacts with lrp6 and ryk. Interacts with tdgf1/frl1. Interacts weakly with frzb1 and strongly with frzb2/crescent. Interaction with frzb2/crescent antagonizes wnt11 function in the neuroectoderm, but enhances it in mesodermal tissue. Post-translationally, glycosylation is required for protein secretion. In terms of processing, palmitoleoylation is required for efficient binding to frizzled receptors. Depalmitoleoylation leads to Wnt signaling pathway inhibition.

Its subcellular location is the secreted. The protein resides in the extracellular space. It localises to the extracellular matrix. Ligand for the frizzled7 transmembrane receptor. Primarily acts via non-canonical Wnt pathways mediated by either Ca(2+) and PKC, or by JNK and dvl2/dsh. Depending on the cellular context, can also signal via the canonical Wnt pathway mediated by beta-catenin and dvl2/dsh. May also inhibit canonical Wnt signaling. Maternally initiates dorsal/ventral axis formation by a canonical route, which signals via lrp6. In a complex with wnt5a, activates the canonical and non-canonical processes involved in axis formation. In the non-canonical pathway, acts through fzd7/fz7 to induce phosphorylation of dvl2/dsh. Signals through a non-canonical Wnt pathway to regulate convergent extension movements during gastrulation. Interactions with the secreted Wnt antagonist sfrp5 to coordinate foregut development, acting via a non-canonical wnt pathway whereby sfrp5 restricts wnt11b activity to prevent inappropriate foregut formation. Mediates cardiogenesis via non-canonical Wnt signaling involving JNK-activation and PKC. Acts redundantly with wnt11/wnt11r during pronephros induction. The chain is Protein Wnt-11b-2 from Xenopus tropicalis (Western clawed frog).